A 332-amino-acid polypeptide reads, in one-letter code: Ferrochelatase (332 aa).

Residues His-201 and Glu-283 each coordinate Fe cation.

Belongs to the ferrochelatase family.

It is found in the cytoplasm. The catalysed reaction is heme b + 2 H(+) = protoporphyrin IX + Fe(2+). Its pathway is porphyrin-containing compound metabolism; protoheme biosynthesis; protoheme from protoporphyrin-IX: step 1/1. Catalyzes the ferrous insertion into protoporphyrin IX. The polypeptide is Ferrochelatase (Francisella tularensis subsp. holarctica (strain FTNF002-00 / FTA)).